The following is a 225-amino-acid chain: Heptaprenylglyceryl phosphate synthase (225 aa).

K6 serves as a coordination point for sn-glycerol 1-phosphate. D8 and T34 together coordinate Mg(2+). Sn-glycerol 1-phosphate contacts are provided by residues 153–158 (YVEYSG), G183, and 203–204 (GN).

This sequence belongs to the GGGP/HepGP synthase family. Group I subfamily. As to quaternary structure, homodimer. The cofactor is Mg(2+).

The enzyme catalyses sn-glycerol 1-phosphate + all-trans-heptaprenyl diphosphate = 3-heptaprenyl-sn-glycero-1-phosphate + diphosphate. The protein operates within membrane lipid metabolism; glycerophospholipid metabolism. In terms of biological role, prenyltransferase that catalyzes in vivo the transfer of the heptaprenyl moiety of heptaprenyl pyrophosphate (HepPP; 35 carbon atoms) to the C3 hydroxyl of sn-glycerol-1-phosphate (G1P), producing heptaprenylglyceryl phosphate (HepGP). This reaction is an ether-bond-formation step in the biosynthesis of archaea-type G1P-based membrane lipids found in Bacillales. To a much lesser extent, is also able to use geranylgeranyl diphosphate (GGPP; C20) as the prenyl donor. This is Heptaprenylglyceryl phosphate synthase from Listeria monocytogenes serovar 1/2a (strain ATCC BAA-679 / EGD-e).